A 210-amino-acid chain; its full sequence is Putative fructokinase-8 (210 aa).

Belongs to the carbohydrate kinase PfkB family.

It catalyses the reaction D-fructose + ATP = D-fructose 6-phosphate + ADP + H(+). It participates in glycan biosynthesis; starch biosynthesis. May play an important role in maintaining the flux of carbon towards starch formation. This chain is Putative fructokinase-8, found in Arabidopsis thaliana (Mouse-ear cress).